Here is a 107-residue protein sequence, read N- to C-terminus: Thiosulfate sulfurtransferase GlpE (107 aa).

In terms of domain architecture, Rhodanese spans A17–S105. C65 (cysteine persulfide intermediate) is an active-site residue.

This sequence belongs to the GlpE family.

It localises to the cytoplasm. The enzyme catalyses thiosulfate + hydrogen cyanide = thiocyanate + sulfite + 2 H(+). It catalyses the reaction thiosulfate + [thioredoxin]-dithiol = [thioredoxin]-disulfide + hydrogen sulfide + sulfite + 2 H(+). In terms of biological role, transferase that catalyzes the transfer of sulfur from thiosulfate to thiophilic acceptors such as cyanide or dithiols. May function in a CysM-independent thiosulfate assimilation pathway by catalyzing the conversion of thiosulfate to sulfite, which can then be used for L-cysteine biosynthesis. This chain is Thiosulfate sulfurtransferase GlpE, found in Erwinia tasmaniensis (strain DSM 17950 / CFBP 7177 / CIP 109463 / NCPPB 4357 / Et1/99).